A 410-amino-acid polypeptide reads, in one-letter code: Protein BTN2 (410 aa).

2 disordered regions span residues 223 to 264 (INEP…TKED) and 276 to 410 (MQEE…IEEI). Composition is skewed to basic and acidic residues over residues 233-264 (SKID…TKED) and 276-311 (MQEE…KESL). The stretch at 243-330 (NMSESLKEEE…QQKKLQNSKS (88 aa)) forms a coiled coil. Residues 334 to 362 (SEIEASNKNNNSNSGSAESDNESINSDSD) show a composition bias toward low complexity. Residues 364 to 373 (TLDFSVSGNT) are compositionally biased toward polar residues.

In terms of assembly, interacts with RHB1, IST2, TDA3 and YIF1.

Its subcellular location is the cytoplasm. It localises to the late endosome. In terms of biological role, V-SNARE binding protein that facilitates specific protein retrieval from a late endosome to the Golgi. Modulates the rate of arginine uptake. Involved in pH homeostasis. Required for the correct localization of IST2. May be involved in ion homeostasis together with IST2. This is Protein BTN2 (BTN2) from Saccharomyces cerevisiae (strain ATCC 204508 / S288c) (Baker's yeast).